Reading from the N-terminus, the 276-residue chain is Vitamin B12-binding protein (276 aa).

The first 20 residues, 1-20 (MIVRFLCWLTGLLLCTAAYA), serve as a signal peptide directing secretion. The region spanning 24-273 (RVISLAPHAT…QLTALSPGSS (250 aa)) is the Fe/B12 periplasmic-binding domain. A disulfide bridge links Cys-186 with Cys-262.

The protein belongs to the BtuF family. The complex is composed of two ATP-binding proteins (BtuD), two transmembrane proteins (BtuC) and a solute-binding protein (BtuF).

Its subcellular location is the periplasm. Functionally, part of the ABC transporter complex BtuCDF involved in vitamin B12 import. Binds vitamin B12 and delivers it to the periplasmic surface of BtuC. The protein is Vitamin B12-binding protein of Pectobacterium carotovorum subsp. carotovorum (strain PC1).